We begin with the raw amino-acid sequence, 616 residues long: Zinc metalloproteinase-disintegrin-like VLAIP-A (616 aa).

A signal peptide spans 1 to 20; sequence MMQVLLVTISLAVFPYQGSS. Positions 21 to 194 are excised as a propeptide; that stretch reads IILESGNVND…KASQLNLTPE (174 aa). Residue glutamine 195 is modified to Pyrrolidone carboxylic acid. Residues 203 to 399 form the Peptidase M12B domain; the sequence is KYIKLVIVAD…KMPQCILNKP (197 aa). Intrachain disulfides connect cysteine 314/cysteine 394, cysteine 354/cysteine 378, and cysteine 356/cysteine 361. Histidine 339 is a binding site for Zn(2+). Residue glutamate 340 is part of the active site. Zn(2+) is bound by residues histidine 343 and histidine 349. An N-linked (GlcNAc...) asparagine glycan is attached at asparagine 377. One can recognise a Disintegrin domain in the interval 407–493; sequence PAVCGNYLVE…ECPTDQFQRN (87 aa). Ca(2+)-binding residues include valine 409, asparagine 412, leucine 414, glutamate 416, glutamate 419, and aspartate 422. 14 cysteine pairs are disulfide-bonded: cysteine 410–cysteine 439, cysteine 421–cysteine 434, cysteine 423–cysteine 429, cysteine 433–cysteine 456, cysteine 447–cysteine 453, cysteine 452–cysteine 478, cysteine 465–cysteine 485, cysteine 472–cysteine 504, cysteine 497–cysteine 509, cysteine 516–cysteine 566, cysteine 531–cysteine 577, cysteine 544–cysteine 554, cysteine 561–cysteine 603, and cysteine 597–cysteine 609. Positions 471–473 match the D/ECD-tripeptide motif; it reads ECD.

The protein belongs to the venom metalloproteinase (M12B) family. P-III subfamily. P-IIIc sub-subfamily. As to quaternary structure, heterodimer; disulfide-linked. Zn(2+) serves as cofactor. In terms of processing, the N-terminus is blocked. In terms of tissue distribution, expressed by the venom gland.

Its subcellular location is the secreted. Its activity is regulated as follows. Inhibited by EDTA or 1,10-phenanthroline. Not inhibited by PMSF. Snake venom zinc metalloprotease that hydrolyzes the alpha-chain (FGA) and more slowly the beta-chain (FGB) of fibrinogen, without affecting the gamma-chain. Cleaves alpha-chain of fibrinogen at '432-Lys-|-Leu-433' and '535-Pro-|-Met-536' bonds. Induces apoptosis in vascular endothelial cells and inhibits endothelial cell adhesion to extracellular matrix proteins such as fibrinogen, fibronectin, vitronectin, collagen I, and collagen IV. Also hydrolyzes azocasein, and insulin B-chain (at the '38-Ala-|-Leu-39' bond). This Macrovipera lebetinus (Levantine viper) protein is Zinc metalloproteinase-disintegrin-like VLAIP-A.